The primary structure comprises 757 residues: Chloride anion exchanger (757 aa).

The Cytoplasmic segment spans residues 1-71 (MIEAIGNQYV…SWLPAYKIKE (71 aa)). Residues 72–92 (WLLSDIVSGISTGLVAVLQGL) form a helical membrane-spanning segment. Position 93 (alanine 93) is a topological domain, extracellular. A helical membrane pass occupies residues 94-114 (FALLVNIPPAYGLYAAFFPVI). Residues 115 to 124 (TYFFLGTSRH) are Cytoplasmic-facing. The helical transmembrane segment at 125 to 145 (ISVGPFPVLSMMVGVVVTRVA) threads the bilayer. At 146–176 (SGSDTSPALSSSSAENDSMIEEKVMVAASVT) the chain is on the extracellular side. The N-linked (GlcNAc...) asparagine glycan is linked to asparagine 161. The chain crosses the membrane as a helical span at residues 177–197 (VLSGIIQLLLGVLQIGFVVIY). At 198 to 201 (LSES) the chain is on the cytoplasmic side. The chain crosses the membrane as a helical span at residues 202-222 (LISGFTTAAAIHVLVSQLKFM). Topologically, residues 223–250 (LQLTVPAHSDPFSIFKVLESVFSQIQKT) are extracellular. Residues 251-271 (NIADLVTSVIILVVVFVVKEI) form a helical membrane-spanning segment. Residues 272–278 (NQRYRSK) lie on the Cytoplasmic side of the membrane. Residues 279–299 (LPVPIPIELIMTVIATGISYG) traverse the membrane as a helical segment. Residues 300–335 (CNFEQRFGVAVVGNMSLGFQPPITPSVEVFQDTIGD) lie on the Extracellular side of the membrane. The chain crosses the membrane as a helical span at residues 336–356 (CFGIAIVGFAVAFSVASVYSL). Residues 357–367 (KYDYPIDGNQE) lie on the Cytoplasmic side of the membrane. The chain crosses the membrane as a helical span at residues 368–388 (LIALGVSNIFTGAFKGFAGST). Residues 389–404 (ALSRSGVQESTGGKTQ) are Extracellular-facing. Residues 405 to 425 (VAGLLSAVIVLIVIVAIGFLL) traverse the membrane as a helical segment. Residues 426-462 (QPLQKSVLAALALGNLKGMLMQFAEIGRLWKKDKYDC) are Cytoplasmic-facing. Residues 463-483 (LIWIMTFIFAIVLGLGLGLAA) traverse the membrane as a helical segment. At 484-757 (SVAFQLLTIV…ECQVPVETKF (274 aa)) the chain is on the extracellular side. One can recognise an STAS domain in the interval 518–713 (NYADVYEPEG…LTIHDAILHI (196 aa)). Residues 754 to 757 (ETKF) carry the PDZ-binding motif.

This sequence belongs to the SLC26A/SulP transporter (TC 2.A.53) family. Interacts with PDZK1, CFTR, SLC26A6 and NHERF1. Interacts (via PDZ-binding motif) with NHERF4 (via the third PDZ domain); interaction leads to decreased expression of SLC26A3 on the cell membrane resulting in its reduced exchanger activity. Post-translationally, N-glycosylation is required for efficient cell surface expression, and protection from proteolytic degradation.

It localises to the apical cell membrane. Its subcellular location is the membrane. The protein resides in the cell membrane. It carries out the reaction hydrogencarbonate(in) + 2 chloride(out) = hydrogencarbonate(out) + 2 chloride(in). Mediates chloride-bicarbonate exchange with a chloride bicarbonate stoichiometry of 2:1 in the intestinal epithelia. Plays a role in the chloride and bicarbonate homeostasis during sperm epididymal maturation and capacitation. This chain is Chloride anion exchanger (Slc26a3), found in Rattus norvegicus (Rat).